The primary structure comprises 215 residues: AN1-type zinc finger protein C1271.05c (215 aa).

A compositionally biased stretch (polar residues) spans Ile-116–Pro-128. Residues Ile-116 to Ala-138 form a disordered region. The AN1-type zinc finger occupies Ala-144–Lys-193. Cys-150, Cys-155, Cys-166, Cys-169, Cys-174, His-177, His-183, and Cys-185 together coordinate Zn(2+).

It is found in the cytoplasm. It localises to the nucleus. The polypeptide is AN1-type zinc finger protein C1271.05c (Schizosaccharomyces pombe (strain 972 / ATCC 24843) (Fission yeast)).